Consider the following 98-residue polypeptide: MSMVYANIFLAFIMSLMGLLMYRSHLMSSLLCLEGMMLSLFVMMTVTILNNHFTLANMAPIILLVFAACEAALGLLLLVMVSNTYGTDYVQNLNLLQC.

Transmembrane regions (helical) follow at residues Met1–Met21, Ser29–Leu49, and Ile61–Val81.

The protein belongs to the complex I subunit 4L family. In terms of assembly, core subunit of respiratory chain NADH dehydrogenase (Complex I) which is composed of 45 different subunits.

Its subcellular location is the mitochondrion inner membrane. The enzyme catalyses a ubiquinone + NADH + 5 H(+)(in) = a ubiquinol + NAD(+) + 4 H(+)(out). In terms of biological role, core subunit of the mitochondrial membrane respiratory chain NADH dehydrogenase (Complex I) which catalyzes electron transfer from NADH through the respiratory chain, using ubiquinone as an electron acceptor. Part of the enzyme membrane arm which is embedded in the lipid bilayer and involved in proton translocation. The sequence is that of NADH-ubiquinone oxidoreductase chain 4L (MT-ND4L) from Pusa hispida (Ringed seal).